A 254-amino-acid polypeptide reads, in one-letter code: Guanylate kinase (254 aa).

In terms of domain architecture, Guanylate kinase-like spans 64-243; that stretch reads KHLVVLAGPT…AAREVVDLMM (180 aa). An ATP-binding site is contributed by 71–78; the sequence is GPTAVGKG.

The protein belongs to the guanylate kinase family.

Its subcellular location is the cytoplasm. The enzyme catalyses GMP + ATP = GDP + ADP. Its function is as follows. Essential for recycling GMP and indirectly, cGMP. The polypeptide is Guanylate kinase (Leifsonia xyli subsp. xyli (strain CTCB07)).